A 97-amino-acid polypeptide reads, in one-letter code: Aspartyl/glutamyl-tRNA(Asn/Gln) amidotransferase subunit C (97 aa).

Residues 74-84 (TPEEATAAAPA) are compositionally biased toward low complexity. Residues 74 to 97 (TPEEATAAAPAREGTAFKVPRIIE) form a disordered region.

This sequence belongs to the GatC family. Heterotrimer of A, B and C subunits.

It carries out the reaction L-glutamyl-tRNA(Gln) + L-glutamine + ATP + H2O = L-glutaminyl-tRNA(Gln) + L-glutamate + ADP + phosphate + H(+). The enzyme catalyses L-aspartyl-tRNA(Asn) + L-glutamine + ATP + H2O = L-asparaginyl-tRNA(Asn) + L-glutamate + ADP + phosphate + 2 H(+). In terms of biological role, allows the formation of correctly charged Asn-tRNA(Asn) or Gln-tRNA(Gln) through the transamidation of misacylated Asp-tRNA(Asn) or Glu-tRNA(Gln) in organisms which lack either or both of asparaginyl-tRNA or glutaminyl-tRNA synthetases. The reaction takes place in the presence of glutamine and ATP through an activated phospho-Asp-tRNA(Asn) or phospho-Glu-tRNA(Gln). In Anaeromyxobacter dehalogenans (strain 2CP-1 / ATCC BAA-258), this protein is Aspartyl/glutamyl-tRNA(Asn/Gln) amidotransferase subunit C.